A 271-amino-acid chain; its full sequence is PH domain-containing protein ECU06_0670 (271 aa).

Residues 26–145 (AKKTLDSSES…EKKNDAFIPP (120 aa)) form a disordered region. Composition is skewed to basic and acidic residues over residues 42–64 (EVGEVDEVKGMETDAEKKDEPAM), 92–120 (QPEKQEAADGEDSSKKESPREEQTPLLDK), and 128–140 (EENAKPSSEKKND). The region spanning 166–267 (NTVVEGWMWK…WVEKLNETIR (102 aa)) is the PH domain.

The polypeptide is PH domain-containing protein ECU06_0670 (Encephalitozoon cuniculi (strain GB-M1) (Microsporidian parasite)).